The chain runs to 628 residues: Biosynthetic arginine decarboxylase (628 aa).

Residue Lys99 is modified to N6-(pyridoxal phosphate)lysine. 279–289 (VDVGGGLGIDY) provides a ligand contact to substrate.

Belongs to the Orn/Lys/Arg decarboxylase class-II family. SpeA subfamily. Requires Mg(2+) as cofactor. Pyridoxal 5'-phosphate serves as cofactor.

It carries out the reaction L-arginine + H(+) = agmatine + CO2. The protein operates within amine and polyamine biosynthesis; agmatine biosynthesis; agmatine from L-arginine: step 1/1. In terms of biological role, catalyzes the biosynthesis of agmatine from arginine. The sequence is that of Biosynthetic arginine decarboxylase from Xylella fastidiosa (strain M23).